The chain runs to 725 residues: Ophiobolin F synthase (725 aa).

Residues 1–322 (MEYKYSTIVD…RYHADAKFNE (322 aa)) are (7Z)-ophiobola-7,19-dien-3-ol synthase. The Mg(2+) site is built by Asp-93 and Asp-97. Asp-93 is a binding site for substrate. Residues 93 to 97 (DDEID) carry the DDXXD 1 motif. Residues 182–185 (RCMD), Asn-226, 230–234 (SYEKE), and 313–314 (RY) contribute to the substrate site. The NSE/DTE signature appears at 226-234 (NDLFSYEKE). Residues 323–725 (LQMLRAEHGV…LRMMLELLKV (403 aa)) are geranylfarnesyl diphosphate synthase. The segment at 362 to 388 (GVNGVNGKRKRSGEETADDARTNGNGI) is disordered. Residues 373–382 (SGEETADDAR) show a composition bias toward basic and acidic residues. Isopentenyl diphosphate-binding residues include Lys-436, Arg-439, and His-468. Asp-475 and Asp-479 together coordinate Mg(2+). The DDXXD 2 signature appears at 475-479 (DDIED). Arg-484 is a dimethylallyl diphosphate binding site. Residue Arg-485 participates in isopentenyl diphosphate binding. 6 residues coordinate dimethylallyl diphosphate: Lys-562, Thr-563, Gln-601, Asn-608, Lys-618, and Lys-628.

In the N-terminal section; belongs to the terpene synthase family. The protein in the C-terminal section; belongs to the FPP/GGPP synthase family. Mg(2+) serves as cofactor.

It catalyses the reaction isopentenyl diphosphate + (2E,6E)-farnesyl diphosphate = (2E,6E,10E)-geranylgeranyl diphosphate + diphosphate. The enzyme catalyses isopentenyl diphosphate + (2E,6E,10E)-geranylgeranyl diphosphate = (2E,6E,10E,14E)-geranylfarnesyl diphosphate + diphosphate. The catalysed reaction is (2E,6E,10E,14E)-geranylfarnesyl diphosphate + H2O = ophiobolin F + diphosphate. The protein operates within secondary metabolite biosynthesis; terpenoid biosynthesis. Functionally, bifunctional sesterterpene synthase that converts isopentenyl diphosphate (IPP) and dimethylallyl diphosphate (DMAPP) into ophiobolin F. The C-terminal prenyltransferase (PT) domain of AcldOS converts isopentenyl diphosphate and dimethylallyl diphosphate into geranylfarnesyl diphosphate (GFPP), whereas the N-terminal terpene cyclase (TC) domain catalyzes the cyclization of GFPP to ophiobolin F. This Aspergillus calidoustus protein is Ophiobolin F synthase.